Consider the following 186-residue polypeptide: T-cell receptor-associated transmembrane adapter 1 (186 aa).

Residues 1-7 (MSGISGC) lie on the Extracellular side of the membrane. A helical; Signal-anchor for type III membrane protein transmembrane segment spans residues 8–28 (PFFLWGLLALLGLALVISLIF). The Cytoplasmic segment spans residues 29–186 (NISHYVEKQR…LIRAKREPIN (158 aa)). At serine 46 the chain carries Phosphoserine. Position 79 is a phosphotyrosine (tyrosine 79). The interval 79–82 (YEQM) is interaction with PIK3R1. The disordered stretch occupies residues 116–140 (SVKGKRRKPRKQNTHFSDKDGDEQL). Positions 118-128 (KGKRRKPRKQN) are enriched in basic residues. Residues 131–140 (FSDKDGDEQL) are compositionally biased toward basic and acidic residues.

In terms of assembly, homodimer; disulfide-linked. Interacts with CD3Z. When phosphorylated, interacts with PIK3R1. Post-translationally, phosphorylated on tyrosines by LCK or FYN upon TCR activation. Strongly expressed in thymus, and to a lesser extent in spleen, lymph node and peripheral blood lymphocytes. Present in T-cells and NK cells, but not B-cells (at protein level).

It is found in the cell membrane. Stabilizes the TCR (T-cell antigen receptor)/CD3 complex at the surface of T-cells. This chain is T-cell receptor-associated transmembrane adapter 1 (TRAT1), found in Homo sapiens (Human).